The primary structure comprises 191 residues: MLKKTLAALALGSALFTAGQAMAADYKIDKEGQHAFIEFRIKHLGYSWLYGRFNDFDGSFTFDEKNPSADKVKVTINTNSVDTNHAERDKHLRSGDFLNVGKNPTATFESTEVKANGDSADITGNLTLNGVTKPVTIKAKLLGQGNDPWGGYRAGFEGSATLKLKDFGIKMDLGPASQEVELLLSVEGIRQ.

The first 23 residues, M1–A23, serve as a signal peptide directing secretion.

Belongs to the UPF0312 family. Type 1 subfamily.

It localises to the periplasm. The polypeptide is UPF0312 protein PSPA7_0523 (Pseudomonas paraeruginosa (strain DSM 24068 / PA7) (Pseudomonas aeruginosa (strain PA7))).